The chain runs to 1264 residues: TBC1 domain family member 9 (1264 aa).

GRAM domains are found at residues 146-213 (VKFH…EKNA) and 293-361 (ERYR…EKAD). The interval 410–456 (KEFSGSCNSSDDEVYSRPSSLVSSSPQRSTSSDADGERPFNLNGNSV) is disordered. The segment covering 425 to 441 (SRPSSLVSSSPQRSTSS) has biased composition (low complexity). The Rab-GAP TBC domain occupies 515-702 (GIPESMRGEL…VVVDCFFYEG (188 aa)). Residues 886-921 (HSDVLASRLFQLLDENGDSLINFREFVSGLSAACHG) form the EF-hand domain. Residues 1119–1138 (SEEHSLGGQMEDIKLEDSSP) are compositionally biased toward basic and acidic residues. The disordered stretch occupies residues 1119–1162 (SEEHSLGGQMEDIKLEDSSPRDNGACSSMLISDDDTKDDSSMSS).

Its function is as follows. May act as a GTPase-activating protein for Rab family protein(s). The sequence is that of TBC1 domain family member 9 (Tbc1d9) from Mus musculus (Mouse).